The sequence spans 500 residues: Maturase K (500 aa).

It belongs to the intron maturase 2 family. MatK subfamily.

It is found in the plastid. It localises to the chloroplast. In terms of biological role, usually encoded in the trnK tRNA gene intron. Probably assists in splicing its own and other chloroplast group II introns. In Argentina anserina (Silverweed cinquefoil), this protein is Maturase K.